A 391-amino-acid polypeptide reads, in one-letter code: MTNNTKTITLNIGPQHPATHGVLRLILEMDGEVVNNADPHIGLLHRGTEKLIEHKTYLQAIPYFDRLDYVSPMCQEHAFALAVESLLECEVPRRAQFIRVLFSELTRILNHTLNIGSQALDIGATTPLLWLFEEREKIMEFYEHVSGSRMHSNYFRPGGVAADLPEGLLEDIDKFIEQFPPKLHDIESLLNENRLWKQRLVDIGVASQKEAMDWGFSGPMLRGSGIAWDLRKSNPYDVYDEMDFKVPIGKNGDCYDRYFVRMLEMYESIKIIKQCIEKMPKGAIKTDDPKLTPPTRAKMKESMEAMIHHFKLYTEGYDVPAGETYKAVEAPKGEFGVYLYSQGGNRPYRCRIKAPGFAHLQGLDFMSKGHLMADVITIIATLDIVFGEIDR.

Belongs to the complex I 49 kDa subunit family. In terms of assembly, NDH-1 is composed of 14 different subunits. Subunits NuoB, C, D, E, F, and G constitute the peripheral sector of the complex.

Its subcellular location is the cell inner membrane. The enzyme catalyses a quinone + NADH + 5 H(+)(in) = a quinol + NAD(+) + 4 H(+)(out). Functionally, NDH-1 shuttles electrons from NADH, via FMN and iron-sulfur (Fe-S) centers, to quinones in the respiratory chain. The immediate electron acceptor for the enzyme in this species is believed to be ubiquinone. Couples the redox reaction to proton translocation (for every two electrons transferred, four hydrogen ions are translocated across the cytoplasmic membrane), and thus conserves the redox energy in a proton gradient. This is NADH-quinone oxidoreductase subunit D from Rickettsia conorii (strain ATCC VR-613 / Malish 7).